The primary structure comprises 1076 residues: MLRNGNEGMSTIPGFSQIQFEGFFRFINQALAEELDKFPTIKDPDHEIAFQLFAKGYQLLEPSIKERDAVYESLTYSSELYVSARLIFGFDVQKQTISIGNIPIMNSLGTFIINGIYRIVINQILLSPGIYYRSELDHKGISIYTGTIISDWGGRSELAIDKKERIWARVSRKQKISILVLSSAMGSNLREILDNVSYPEIFLSFPNAKEKKRIESKEKAILEFYQQFACVGGDLVFSESLCEELQKKFFQQKCELGRIGRRNMNRRLNLDIPQNNTFLLPRDVLAATDHLIGMKFGTGILDDDDMNHLKNKRIRSVADLLQDQFGLALGRLQHAVQKTIRRVFIRQSKPTPQTLVTPTSTSILLITTYETFFGTYPLSQVFDQTNPLTQTVHGRKVSCLGPGGLTGRTASFRSRDIHPSHYGRICPIDTSEGINVGLTGSLAIHARIDHLWGSIESPFYEISAEKAKEKKERQVVYLSPNRDEYYMIAAGNSLSLNQGIQEEQVVPARYRQEFLTIAWEQIHVRSIFPFQYFSIGGSLIPFIEHNDANRALMSSNMQRQAVPLSRSEKCIVGTGLERQTALDSRVSVIAEREGKIISTDSHKILLSSSGKTISIPLVNHRRSNKNTCMHQKPRVPRGKSIKKGQILAEGAATVGGELALGKNVLVAYMPWEGYNFEDAVLISERLVYEDIYTSFHIRKYEIQTDTTSQGSAEKITKEIPHLEEHLLRNLDKNGVVRLGSWVETGDILVGKLTPQIASESSYIAEAGLLRAIFGLEVSTSKETSLKLPIGGRGRVIDVKWIQRDPLDIMVRVYILQKREIKVGDKVAGRHGNKGIISKILPRQDMPYLQDGTPVDMVFNPLGVPSRMNVGQIFESSLGLAGDLLKKHYRIAPFDERYEQEASRKLVFSELYEASKETKNPWVFEPEYPGKSRIFDGRTGDPFEQPVLIGKSYILKLIHQVDEKIHGRSTGPYSLVTQQPVRGRAKQGGQRVGEMEVWALEGFGVAHILQEILTYKSDHLIARQEILNATIWGKRIPNHEDPPESFRVLVRELRSLALELNHFLVSEKNFQVNREEV.

Belongs to the RNA polymerase beta chain family. In terms of assembly, in plastids the minimal PEP RNA polymerase catalytic core is composed of four subunits: alpha, beta, beta', and beta''. When a (nuclear-encoded) sigma factor is associated with the core the holoenzyme is formed, which can initiate transcription.

It localises to the plastid. The protein localises to the chloroplast. The catalysed reaction is RNA(n) + a ribonucleoside 5'-triphosphate = RNA(n+1) + diphosphate. Functionally, DNA-dependent RNA polymerase catalyzes the transcription of DNA into RNA using the four ribonucleoside triphosphates as substrates. The protein is DNA-directed RNA polymerase subunit beta of Hordeum vulgare (Barley).